The primary structure comprises 189 residues: Shikimate kinase (189 aa).

11 to 16 (GTGKSA) lines the ATP pocket. Serine 15 is a Mg(2+) binding site. Substrate is bound by residues aspartate 33, arginine 57, and glycine 79. Arginine 117 contacts ATP. Substrate is bound at residue arginine 135.

This sequence belongs to the shikimate kinase family. Monomer. Mg(2+) serves as cofactor.

The protein resides in the cytoplasm. The catalysed reaction is shikimate + ATP = 3-phosphoshikimate + ADP + H(+). It participates in metabolic intermediate biosynthesis; chorismate biosynthesis; chorismate from D-erythrose 4-phosphate and phosphoenolpyruvate: step 5/7. Functionally, catalyzes the specific phosphorylation of the 3-hydroxyl group of shikimic acid using ATP as a cosubstrate. In Desulforudis audaxviator (strain MP104C), this protein is Shikimate kinase.